Reading from the N-terminus, the 376-residue chain is Deoxyguanosinetriphosphate triphosphohydrolase-like protein (376 aa).

Residues R62–I198 form the HD domain.

This sequence belongs to the dGTPase family. Type 2 subfamily.

The sequence is that of Deoxyguanosinetriphosphate triphosphohydrolase-like protein from Rickettsia canadensis (strain McKiel).